A 376-amino-acid chain; its full sequence is Erythronate-4-phosphate dehydrogenase (376 aa).

Substrate contacts are provided by S45 and T66. NAD(+) is bound by residues 126-127, D146, T174, 201-203, and D227; these read QV and ASR. The active site involves R203. The active site involves E232. H249 (proton donor) is an active-site residue. G252 lines the NAD(+) pocket. Y253 contributes to the substrate binding site.

This sequence belongs to the D-isomer specific 2-hydroxyacid dehydrogenase family. PdxB subfamily. As to quaternary structure, homodimer.

The protein resides in the cytoplasm. It carries out the reaction 4-phospho-D-erythronate + NAD(+) = (R)-3-hydroxy-2-oxo-4-phosphooxybutanoate + NADH + H(+). It participates in cofactor biosynthesis; pyridoxine 5'-phosphate biosynthesis; pyridoxine 5'-phosphate from D-erythrose 4-phosphate: step 2/5. Its function is as follows. Catalyzes the oxidation of erythronate-4-phosphate to 3-hydroxy-2-oxo-4-phosphonooxybutanoate. The chain is Erythronate-4-phosphate dehydrogenase from Ectopseudomonas mendocina (strain ymp) (Pseudomonas mendocina).